The chain runs to 516 residues: Maturase K (516 aa).

This sequence belongs to the intron maturase 2 family. MatK subfamily.

The protein resides in the plastid. The protein localises to the chloroplast. Functionally, usually encoded in the trnK tRNA gene intron. Probably assists in splicing its own and other chloroplast group II introns. The protein is Maturase K of Chara globularis (Fragile stonewort).